Reading from the N-terminus, the 57-residue chain is UPF0391 membrane protein Nham_2738 (57 aa).

A run of 2 helical transmembrane segments spans residues 4 to 24 (WVVT…GGLA) and 30 to 50 (IAKI…VVGL).

It belongs to the UPF0391 family.

The protein resides in the cell membrane. The polypeptide is UPF0391 membrane protein Nham_2738 (Nitrobacter hamburgensis (strain DSM 10229 / NCIMB 13809 / X14)).